A 450-amino-acid chain; its full sequence is MDLKGKKIVAVGLALTGEAVAAFCLDKGASVTVADIASETSLGARVQNVRDMGAQVELGPHNMETFTQADLIVISPGVPHTIPVLEAAREKGVPVIGEVELASRFIQAPIIAVTGTNGKTTVTSLIGEMMEASGISAFVGGNIGNPLVNYAKGEDKAQVVVAEISSFQLDTIESFAPKVALLTNVTEDHMDRYDGMEGYAASKARVFMNQTGADFAILNGCDKWSRAMCGGIKASQWFFTGREEAEAGIAMNAGAMDFFTGAQKHWSLSLKKMTLSGEHNKENAAAAALAAYAAGASVEGIQGAIDAFKGLPHRLEFVREVMDVKYYDDSKATNVDAVLRALEGFNAPVHLIMGGRDKGGHFRDLKDMVEQKAARLYVTGEAAGIITSALSGSVEVVQAGTIEKAVEFAKRAARPGEVVVLSPGCASFDQYKNYKERGKDFCRVVNALPA.

Position 115-121 (115-121 (GTNGKTT)) interacts with ATP.

It belongs to the MurCDEF family.

The protein resides in the cytoplasm. It catalyses the reaction UDP-N-acetyl-alpha-D-muramoyl-L-alanine + D-glutamate + ATP = UDP-N-acetyl-alpha-D-muramoyl-L-alanyl-D-glutamate + ADP + phosphate + H(+). Its pathway is cell wall biogenesis; peptidoglycan biosynthesis. Functionally, cell wall formation. Catalyzes the addition of glutamate to the nucleotide precursor UDP-N-acetylmuramoyl-L-alanine (UMA). This is UDP-N-acetylmuramoylalanine--D-glutamate ligase from Desulfatibacillum aliphaticivorans.